The primary structure comprises 461 residues: METLFNGTLALTGRDQETTGFAWWAGNARLINLSGKLLGAHVAHAGLIVFWAGAMNLFEVAHFVPEKPMYEQGLILLPHLATLGWGVGPGGEVIDTFPYFVSGVLHLISSAVLGFGGIYHALLGPETLEESFPFFGYVWKDRNKMTTILGIHLILLGIGAFLLVFKASYFGGIYDTWAPGGGDVRKITNLTLSPSIIFGYLLKSPFGGEGWIVSVDDLEDIIGGHVWLGSICILGGIWHILTKPFAWARRALVWSGEAYLSYSLAALSVFGFIACCFVWFNNTAYPSEFYGPTGPEASQAQAFTFLVRDQRLGANVGSAQGPTGLGKYLMRSPTGEVIFGGETMRFWDLRAPWLEPLRGPNGLDLSRLKKDIQPWQERRSAEYMTHAPLGSLNSVGGVATEINAVNYVSPRSWLATSHFVLGFFLFVGHLWHAGRARAAAAGFEKGIDRDFEPVLSMTPLN.

A propeptide spanning residues 1–2 (ME) is cleaved from the precursor. An N-acetylthreonine modification is found at Thr-3. Phosphothreonine is present on Thr-3. The next 5 helical transmembrane spans lie at 57-81 (LFEVAHFVPEKPMYEQGLILLPHLA), 122-143 (LLGPETLEESFPFFGYVWKDRN), 166-188 (KASYFGGIYDTWAPGGGDVRKIT), 243-263 (KPFAWARRALVWSGEAYLSYS), and 279-300 (WFNNTAYPSEFYGPTGPEASQA). Glu-355 provides a ligand contact to [CaMn4O5] cluster. Residues 435-459 (RARAAAAGFEKGIDRDFEPVLSMTP) traverse the membrane as a helical segment.

Belongs to the PsbB/PsbC family. PsbC subfamily. As to quaternary structure, PSII is composed of 1 copy each of membrane proteins PsbA, PsbB, PsbC, PsbD, PsbE, PsbF, PsbH, PsbI, PsbJ, PsbK, PsbL, PsbM, PsbT, PsbX, PsbY, PsbZ, Psb30/Ycf12, at least 3 peripheral proteins of the oxygen-evolving complex and a large number of cofactors. It forms dimeric complexes. It depends on Binds multiple chlorophylls and provides some of the ligands for the Ca-4Mn-5O cluster of the oxygen-evolving complex. It may also provide a ligand for a Cl- that is required for oxygen evolution. PSII binds additional chlorophylls, carotenoids and specific lipids. as a cofactor.

The protein resides in the plastid. It localises to the chloroplast thylakoid membrane. Functionally, one of the components of the core complex of photosystem II (PSII). It binds chlorophyll and helps catalyze the primary light-induced photochemical processes of PSII. PSII is a light-driven water:plastoquinone oxidoreductase, using light energy to abstract electrons from H(2)O, generating O(2) and a proton gradient subsequently used for ATP formation. This is Photosystem II CP43 reaction center protein from Lotus japonicus (Lotus corniculatus var. japonicus).